A 424-amino-acid chain; its full sequence is MNEPIDPKSFPSQPLSPYIPMHHIGKGPYKTIFNVLSLNRDHIHWEDYLYKHTPCELVANPETNQQVWFKREDYFAPLSCYMNGKQGINGSKLRQAIWLMVEHLKAGGSPDLIHGTVVGSPQSPMATAVSRHFGGKTTTVLGATKPTTCMNHDMVKMSAWFGSEFNFVGSGYNSTIQPRCKKLIEQQNPKAYYLEYGITLDHTLHSPERIAGFHMLGGEQVANIPDHITDLIIPAGSCNSCTSILTGLAMHPKPNLKNVYLIGIGPNRLDFIESRLRIIGKQANLPHITDFTRCYHDNPDYVYGKKDLQHASKSVSLAGLLMGIREKGESEITLPRFAVHHWDLHTTNWVRYNDLMDYQWGDIELHPRYEGKVMTWIQQHKPELLNENTLFWIVGSKPYIEPMKAACPELSMPEQVPVNEFTPD.

It belongs to the pyridoxal-phosphate-dependent aminodecarboxylase family.

The catalysed reaction is 5-O-(L-seryl)-dTMP in DNA + H(+) = 5-aminoethoxy-methyl-dUMP in DNA + CO2. Functionally, converts 5-O-serinylthymidine (O-SerT) into 5-aminoethoxy-2'-deoxymethyluridine (5-NeOmdU) as a step in the pathway leading to thymidine hypermodifications in the viral genome. As a final result of the pathway of hypermodification, 5-NeOmdU substitutes for about 40% of the thymidines in the viral DNA. These modifications probably prevent degradation of viral genome by the host restriction-modification antiviral defense system. In Salmonella phage ViI, this protein is O-seryl-dTMP PLP-dependent decarboxylase.